Here is a 391-residue protein sequence, read N- to C-terminus: Fructose-bisphosphate aldolase 3, chloroplastic (391 aa).

The transit peptide at 1–40 directs the protein to the chloroplast; the sequence is MASASFVKPNTLSSPWIGQRSFAHTSASSSPPPRVSFAIR. R88 serves as a coordination point for substrate. At S150 the chain carries Phosphoserine. K178 contacts substrate. A Phosphoserine modification is found at S208. E218 functions as the Proton acceptor in the catalytic mechanism. Residue K260 is the Schiff-base intermediate with dihydroxyacetone-P of the active site. 302–304 lines the substrate pocket; sequence SGG. At K387 the chain carries N6,N6,N6-trimethyllysine.

It belongs to the class I fructose-bisphosphate aldolase family. In terms of assembly, homotetramer. In terms of processing, can be trimethylated at Lys-387 by LSMT-L, but the trimethylation has no effect in vitro. S-glutathionylated. In terms of tissue distribution, expressed in roots, and at low levels in rosettes leaves, cauline leaves, stems and flowers.

It is found in the plastid. Its subcellular location is the chloroplast. The protein localises to the plastoglobule. It carries out the reaction beta-D-fructose 1,6-bisphosphate = D-glyceraldehyde 3-phosphate + dihydroxyacetone phosphate. Its pathway is carbohydrate degradation; glycolysis; D-glyceraldehyde 3-phosphate and glycerone phosphate from D-glucose: step 4/4. Its function is as follows. Plays a key role in glycolysis and gluconeogenesis. The polypeptide is Fructose-bisphosphate aldolase 3, chloroplastic (Arabidopsis thaliana (Mouse-ear cress)).